The following is a 611-amino-acid chain: Chaperone protein HtpG (611 aa).

The tract at residues 1-326 is a; substrate-binding; it reads MSETLERHAF…TEDLPLNVSR (326 aa). The segment at 327-536 is b; sequence EMLQATPVLA…SGGPDLQMQR (210 aa). The interval 537-611 is c; sequence LLRRAGRGFG…RVATALAAQG (75 aa).

The protein belongs to the heat shock protein 90 family. Homodimer.

The protein resides in the cytoplasm. Its function is as follows. Molecular chaperone. Has ATPase activity. The polypeptide is Chaperone protein HtpG (Methylobacterium nodulans (strain LMG 21967 / CNCM I-2342 / ORS 2060)).